We begin with the raw amino-acid sequence, 105 residues long: Cortistatin (105 aa).

Residues 1–18 form the signal peptide; the sequence is MPLSPGLLLLLLSGATAT. A propeptide spanning residues 19–74 is cleaved from the precursor; that stretch reads AALPLEGGPTGRDSEHMQEAAGIRKSSLLTFLAWWFEWTSQASAGPLIGEEAREVA. Cys93 and Cys104 form a disulfide bridge.

It belongs to the somatostatin family. In terms of tissue distribution, expressed in a subset of GABAergic cells in the cortex and hippocampus.

The protein localises to the secreted. Binds to all human somatostatin receptor (SSTR) subtypes. It also inhibits cAMP production induced by forskolin through SSTRs. This is Cortistatin (CORT) from Homo sapiens (Human).